We begin with the raw amino-acid sequence, 227 residues long: Deoxyribose-phosphate aldolase (227 aa).

Residue aspartate 98 is the Proton donor/acceptor of the active site. Residue lysine 161 is the Schiff-base intermediate with acetaldehyde of the active site. Lysine 191 functions as the Proton donor/acceptor in the catalytic mechanism.

Belongs to the DeoC/FbaB aldolase family. DeoC type 1 subfamily.

It is found in the cytoplasm. It catalyses the reaction 2-deoxy-D-ribose 5-phosphate = D-glyceraldehyde 3-phosphate + acetaldehyde. Its pathway is carbohydrate degradation; 2-deoxy-D-ribose 1-phosphate degradation; D-glyceraldehyde 3-phosphate and acetaldehyde from 2-deoxy-alpha-D-ribose 1-phosphate: step 2/2. Its function is as follows. Catalyzes a reversible aldol reaction between acetaldehyde and D-glyceraldehyde 3-phosphate to generate 2-deoxy-D-ribose 5-phosphate. The chain is Deoxyribose-phosphate aldolase from Frankia alni (strain DSM 45986 / CECT 9034 / ACN14a).